The following is a 99-amino-acid chain: Cytochrome c oxidase subunit 4 isoform 1, mitochondrial (99 aa).

The Mitochondrial matrix portion of the chain corresponds to 1–73; that stretch reads SVVKSEDFTL…SFAEMNRRSN (73 aa). The residue at position 4 (Lys-4) is an N6-acetyllysine; alternate. At Lys-4 the chain carries N6-succinyllysine; alternate. An N6-acetyllysine modification is found at Lys-28. Phosphoserine occurs at positions 31 and 33. N6-acetyllysine; alternate is present on Lys-35. Position 35 is an N6-succinyllysine; alternate (Lys-35). N6-acetyllysine is present on Lys-42. Residues 74–99 form a helical membrane-spanning segment; sequence EWKTVVGTAMFFIGITALVIMWEKLY.

This sequence belongs to the cytochrome c oxidase IV family. In terms of assembly, component of the cytochrome c oxidase (complex IV, CIV), a multisubunit enzyme composed of 14 subunits. The complex is composed of a catalytic core of 3 subunits MT-CO1, MT-CO2 and MT-CO3, encoded in the mitochondrial DNA, and 11 supernumerary subunits COX4I, COX5A, COX5B, COX6A, COX6B, COX6C, COX7A, COX7B, COX7C, COX8 and NDUFA4, which are encoded in the nuclear genome. The complex exists as a monomer or a dimer and forms supercomplexes (SCs) in the inner mitochondrial membrane with NADH-ubiquinone oxidoreductase (complex I, CI) and ubiquinol-cytochrome c oxidoreductase (cytochrome b-c1 complex, complex III, CIII), resulting in different assemblies (supercomplex SCI(1)III(2)IV(1) and megacomplex MCI(2)III(2)IV(2)). Interacts with PHB2; the interaction decreases in absence of SPHK2. Interacts with AFG1L. Interacts with ABCB7; this interaction allows the regulation of cellular iron homeostasis and cellular reactive oxygen species (ROS) levels in cardiomyocytes. Interacts with FLVCR2; this interaction occurs in the absence of heme and is disrupted upon heme binding. Interacts with IRGC.

It is found in the mitochondrion inner membrane. Its pathway is energy metabolism; oxidative phosphorylation. In terms of biological role, component of the cytochrome c oxidase, the last enzyme in the mitochondrial electron transport chain which drives oxidative phosphorylation. The respiratory chain contains 3 multisubunit complexes succinate dehydrogenase (complex II, CII), ubiquinol-cytochrome c oxidoreductase (cytochrome b-c1 complex, complex III, CIII) and cytochrome c oxidase (complex IV, CIV), that cooperate to transfer electrons derived from NADH and succinate to molecular oxygen, creating an electrochemical gradient over the inner membrane that drives transmembrane transport and the ATP synthase. Cytochrome c oxidase is the component of the respiratory chain that catalyzes the reduction of oxygen to water. Electrons originating from reduced cytochrome c in the intermembrane space (IMS) are transferred via the dinuclear copper A center (CU(A)) of subunit 2 and heme A of subunit 1 to the active site in subunit 1, a binuclear center (BNC) formed by heme A3 and copper B (CU(B)). The BNC reduces molecular oxygen to 2 water molecules using 4 electrons from cytochrome c in the IMS and 4 protons from the mitochondrial matrix. This is Cytochrome c oxidase subunit 4 isoform 1, mitochondrial (COX4I1) from Mandrillus sphinx (Mandrill).